The following is a 599-amino-acid chain: UvrABC system protein C (599 aa).

The 79-residue stretch at Gln-18–Ile-96 folds into the GIY-YIG domain. The 36-residue stretch at Lys-207–Val-242 folds into the UVR domain.

Belongs to the UvrC family. Interacts with UvrB in an incision complex.

Its subcellular location is the cytoplasm. Functionally, the UvrABC repair system catalyzes the recognition and processing of DNA lesions. UvrC both incises the 5' and 3' sides of the lesion. The N-terminal half is responsible for the 3' incision and the C-terminal half is responsible for the 5' incision. The sequence is that of UvrABC system protein C from Acinetobacter baylyi (strain ATCC 33305 / BD413 / ADP1).